The chain runs to 100 residues: Small ribosomal subunit protein uS14c (100 aa).

The protein belongs to the universal ribosomal protein uS14 family. As to quaternary structure, part of the 30S ribosomal subunit.

The protein localises to the plastid. The protein resides in the chloroplast. In terms of biological role, binds 16S rRNA, required for the assembly of 30S particles. The sequence is that of Small ribosomal subunit protein uS14c from Cryptomeria japonica (Japanese cedar).